The chain runs to 103 residues: Large ribosomal subunit protein bL21 (103 aa).

This sequence belongs to the bacterial ribosomal protein bL21 family. As to quaternary structure, part of the 50S ribosomal subunit. Contacts protein L20.

This protein binds to 23S rRNA in the presence of protein L20. In Salmonella agona (strain SL483), this protein is Large ribosomal subunit protein bL21.